Consider the following 320-residue polypeptide: Variant surface glycoprotein ILTAT 1.2 (320 aa).

Asn-146, Asn-282, and Asn-295 each carry an N-linked (GlcNAc...) asparagine glycan. The disordered stretch occupies residues 297-320 (TKATENGVPVAQTQTGGSETTTEK). The segment covering 308-320 (QTQTGGSETTTEK) has biased composition (low complexity).

Its subcellular location is the cell membrane. VSG forms a coat on the surface of the parasite. The trypanosome evades the immune response of the host by expressing a series of antigenically distinct VSGs from an estimated 1000 VSG genes. This Trypanosoma brucei brucei protein is Variant surface glycoprotein ILTAT 1.2.